The sequence spans 325 residues: UPF0285 protein MM_0679 (325 aa).

This sequence belongs to the UPF0285 family.

The polypeptide is UPF0285 protein MM_0679 (Methanosarcina mazei (strain ATCC BAA-159 / DSM 3647 / Goe1 / Go1 / JCM 11833 / OCM 88) (Methanosarcina frisia)).